Consider the following 231-residue polypeptide: 5'-methylthioadenosine/S-adenosylhomocysteine nucleosidase (231 aa).

The Proton acceptor role is filled by Glu12. Substrate is bound by residues Gly78, Val153, and 174–175; that span reads ME. Catalysis depends on Asp198, which acts as the Proton donor.

This sequence belongs to the PNP/UDP phosphorylase family. MtnN subfamily.

The enzyme catalyses S-adenosyl-L-homocysteine + H2O = S-(5-deoxy-D-ribos-5-yl)-L-homocysteine + adenine. It carries out the reaction S-methyl-5'-thioadenosine + H2O = 5-(methylsulfanyl)-D-ribose + adenine. It catalyses the reaction 5'-deoxyadenosine + H2O = 5-deoxy-D-ribose + adenine. It functions in the pathway amino-acid biosynthesis; L-methionine biosynthesis via salvage pathway; S-methyl-5-thio-alpha-D-ribose 1-phosphate from S-methyl-5'-thioadenosine (hydrolase route): step 1/2. Its function is as follows. Catalyzes the irreversible cleavage of the glycosidic bond in both 5'-methylthioadenosine (MTA) and S-adenosylhomocysteine (SAH/AdoHcy) to adenine and the corresponding thioribose, 5'-methylthioribose and S-ribosylhomocysteine, respectively. Also cleaves 5'-deoxyadenosine, a toxic by-product of radical S-adenosylmethionine (SAM) enzymes, into 5-deoxyribose and adenine. This is 5'-methylthioadenosine/S-adenosylhomocysteine nucleosidase from Vibrio campbellii (strain ATCC BAA-1116).